A 313-amino-acid chain; its full sequence is Ribonuclease HIII (313 aa).

The RNase H type-2 domain maps to 94–310 (MSVIGSDEVG…TQKAKRLVER (217 aa)). Residues aspartate 100, glutamate 101, and aspartate 205 each contribute to the a divalent metal cation site.

This sequence belongs to the RNase HII family. RnhC subfamily. Mn(2+) is required as a cofactor. Requires Mg(2+) as cofactor.

Its subcellular location is the cytoplasm. The catalysed reaction is Endonucleolytic cleavage to 5'-phosphomonoester.. Functionally, endonuclease that specifically degrades the RNA of RNA-DNA hybrids. The sequence is that of Ribonuclease HIII from Bacillus velezensis (strain DSM 23117 / BGSC 10A6 / LMG 26770 / FZB42) (Bacillus amyloliquefaciens subsp. plantarum).